The following is a 271-amino-acid chain: Dioscorin dioA3 (271 aa).

Positions Met-1–Ser-21 are cleaved as a signal peptide. The Alpha-carbonic anhydrase domain occupies Asp-28–Glu-262. An intrachain disulfide couples Cys-53 to Cys-212. The active-site Proton acceptor is His-94. L-ascorbate contacts are provided by residues Asp-95, His-120–His-122, Gln-139, and Thr-208–Ala-209.

The protein belongs to the alpha-carbonic anhydrase family. As to quaternary structure, monomer. Homodimer. Not glycosylated. Expressed in tuber (at protein level).

It catalyses the reaction hydrogencarbonate + H(+) = CO2 + H2O. The enzyme catalyses 2 monodehydro-L-ascorbate radical + NADH + H(+) = 2 L-ascorbate + NAD(+). With respect to regulation, the carbonate dehydratase activity is not substantially changed by the addition of Zn(2+). Its function is as follows. Storage protein of tuber. Involved in protection against oxidative stress. Has carbonate dehydratase, trypsin inhibitor, dehydroascorbate (DHA) reductase and monodehydroascorbate (MDA) reductase activities. Catalyzes the reactions of carbonate dehydratase and DHA reductase independently of zinc and glutathione (GSH). The coupled reaction is capable of recycling a plant antioxidant ascorbate using ubiquitous compounds H(2)O and CO(2). Exhibits antioxidant activity. Able to scavenge 1,1-diphenyl-2-picrylhydrazyl (DPPH) radical. Exhibits immunomodulatory activity. Activates Toll-like receptor 4 signaling pathways by up-regulating the gene expression of pro-inflammatory cytokines, such as tumor necrosis factor alpha, interleukin-1 beta and interleukin-6, and chemokines RANTES and MCP-1, in mouse RAW 264.7 macrophages. Stimulates the phagocytosis of E.coli by the LPS-treated mouse macrophages. The protein is Dioscorin dioA3 of Dioscorea japonica (Japanese yam).